Reading from the N-terminus, the 408-residue chain is (R)-2-hydroxyisocaproyl-CoA dehydratase alpha subunit (408 aa).

Glu55 is a substrate binding site. Residues Cys84, Cys117, and Cys346 each coordinate [4Fe-4S] cluster.

Belongs to the FldB/FldC dehydratase alpha/beta subunit family. Part of the heterodimeric complex HadBC composed of (R)-2-hydroxyisocaproyl-CoA dehydratase alpha (HadB) and beta (HadC) subunit. Requires [4Fe-4S] cluster as cofactor.

It catalyses the reaction (R)-2-hydroxy-4-methylpentanoyl-CoA = 4-methylpent-2-enoyl-CoA + H2O. With respect to regulation, activated by HadI. Its function is as follows. Involved in the reductive branch of L-leucine fermentation. Catalyzes the irreversible beta/alpha-elimination of water from (R)-2-hydroxyisocaproyl-CoA to yield isocaprenoyl-CoA. This beta/alpha-dehydration depends on the reductive formation of ketyl radicals on the substrate generated by injection of a single electron from the ATP-dependent activator protein HadI. The enzyme is specific for the R-isomer. The protein is (R)-2-hydroxyisocaproyl-CoA dehydratase alpha subunit of Clostridioides difficile (Peptoclostridium difficile).